We begin with the raw amino-acid sequence, 173 residues long: Shikimate kinase 1 (173 aa).

14 to 19 contributes to the ATP binding site; sequence GAGKST. Residue serine 18 participates in Mg(2+) binding. 3 residues coordinate substrate: aspartate 36, arginine 60, and glycine 82. Arginine 120 serves as a coordination point for ATP. Arginine 140 is a binding site for substrate. Glutamine 157 serves as a coordination point for ATP.

Belongs to the shikimate kinase family. As to quaternary structure, monomer. Mg(2+) serves as cofactor.

It is found in the cytoplasm. The catalysed reaction is shikimate + ATP = 3-phosphoshikimate + ADP + H(+). It functions in the pathway metabolic intermediate biosynthesis; chorismate biosynthesis; chorismate from D-erythrose 4-phosphate and phosphoenolpyruvate: step 5/7. Functionally, catalyzes the specific phosphorylation of the 3-hydroxyl group of shikimic acid using ATP as a cosubstrate. In Pectobacterium atrosepticum (strain SCRI 1043 / ATCC BAA-672) (Erwinia carotovora subsp. atroseptica), this protein is Shikimate kinase 1.